Reading from the N-terminus, the 306-residue chain is Porphobilinogen deaminase (306 aa).

Cys-239 carries the post-translational modification S-(dipyrrolylmethanemethyl)cysteine.

This sequence belongs to the HMBS family. In terms of assembly, monomer. It depends on dipyrromethane as a cofactor.

It catalyses the reaction 4 porphobilinogen + H2O = hydroxymethylbilane + 4 NH4(+). The protein operates within porphyrin-containing compound metabolism; protoporphyrin-IX biosynthesis; coproporphyrinogen-III from 5-aminolevulinate: step 2/4. Its function is as follows. Tetrapolymerization of the monopyrrole PBG into the hydroxymethylbilane pre-uroporphyrinogen in several discrete steps. The polypeptide is Porphobilinogen deaminase (hemC) (Helicobacter pylori (strain J99 / ATCC 700824) (Campylobacter pylori J99)).